Here is a 330-residue protein sequence, read N- to C-terminus: Aspartate--ammonia ligase (330 aa).

Belongs to the class-II aminoacyl-tRNA synthetase family. AsnA subfamily.

Its subcellular location is the cytoplasm. The enzyme catalyses L-aspartate + NH4(+) + ATP = L-asparagine + AMP + diphosphate + H(+). It functions in the pathway amino-acid biosynthesis; L-asparagine biosynthesis; L-asparagine from L-aspartate (ammonia route): step 1/1. This is Aspartate--ammonia ligase from Escherichia coli O17:K52:H18 (strain UMN026 / ExPEC).